The chain runs to 138 residues: Ribosomal RNA large subunit methyltransferase H (138 aa).

S-adenosyl-L-methionine contacts are provided by residues leucine 57, glycine 86, and 105–110 (LSPLTF).

Belongs to the RNA methyltransferase RlmH family. In terms of assembly, homodimer.

Its subcellular location is the cytoplasm. It catalyses the reaction pseudouridine(1915) in 23S rRNA + S-adenosyl-L-methionine = N(3)-methylpseudouridine(1915) in 23S rRNA + S-adenosyl-L-homocysteine + H(+). Functionally, specifically methylates the pseudouridine at position 1915 (m3Psi1915) in 23S rRNA. The protein is Ribosomal RNA large subunit methyltransferase H of Prochlorococcus marinus (strain MIT 9312).